A 392-amino-acid chain; its full sequence is Norsolorinic acid reductase B (392 aa).

Asp-75 serves as a coordination point for NADP(+). The active-site Proton donor is the Tyr-80. Residues 184–185 (SD), Gln-210, 239–249 (GTLGQGSFQTE), and 311–319 (RKLEHIQGN) contribute to the NADP(+) site. Residues 242-263 (GQGSFQTEEGRKQREKDNPGRK) are disordered. Positions 249 to 261 (EEGRKQREKDNPG) are enriched in basic and acidic residues.

The protein belongs to the aldo/keto reductase family. Aldo/keto reductase 2 subfamily.

It functions in the pathway mycotoxin biosynthesis. Its function is as follows. Norsolorinic acid reductase; part of the fragmented gene cluster that mediates the biosynthesis of dothistromin (DOTH), a polyketide toxin very similar in structure to the aflatoxin precursor, versicolorin B. The first step of the pathway is the conversion of acetate to norsolorinic acid (NOR) and requires the fatty acid synthase subunits hexA and hexB, as well as the polyketide synthase pksA. PksA combines a hexanoyl starter unit and 7 malonyl-CoA extender units to synthesize the precursor NOR. The hexanoyl starter unit is provided to the acyl-carrier protein (ACP) domain by the fungal fatty acid synthase hexA/hexB. The second step is the conversion of NOR to averantin (AVN) and requires the norsolorinic acid ketoreductase nor1, which catalyzes the dehydration of norsolorinic acid to form (1'S)-averantin. The cytochrome P450 monooxygenase avnA then catalyzes the hydroxylation of AVN to 5'hydroxyaverantin (HAVN). The next step is performed by adhA that transforms HAVN to averufin (AVF). Averufin might then be converted to hydroxyversicolorone by cypX and avfA. Hydroxyversicolorone is further converted versiconal hemiacetal acetate (VHA) by moxY. VHA is then the substrate for the versiconal hemiacetal acetate esterase est1 to yield versiconal (VAL). Versicolorin B synthase vbsA then converts VAL to versicolorin B (VERB) by closing the bisfuran ring. Then, the activity of the versicolorin B desaturase verB leads to versicolorin A (VERA). DotB, a predicted chloroperoxidase, may perform epoxidation of the A-ring of VERA. Alternatively, a cytochrome P450, such as cypX or avnA could catalyze this step. It is also possible that another, uncharacterized, cytochrome P450 enzyme is responsible for this step. Opening of the epoxide could potentially be achieved by the epoxide hydrolase epoA. However, epoA seems not to be required for DOTH biosynthesis, but other epoxide hydrolases may have the ability to complement this hydrolysis. Alternatively, opening of the epoxide ring could be achieved non-enzymatically. The next step is the deoxygenation of ring A to yield the 5,8-dihydroxyanthraquinone which is most likely catalyzed by the NADPH dehydrogenase encoded by ver1. The last stages of DOTH biosynthesis are proposed to involve hydroxylation of the bisfuran. OrdB and norB might have oxidative roles here. An alternative possibility is that cytochrome P450 monoogenases such as avnA and cypX might perform these steps in addition to previously proposed steps. The protein is Norsolorinic acid reductase B of Dothistroma septosporum (strain NZE10 / CBS 128990) (Red band needle blight fungus).